We begin with the raw amino-acid sequence, 92 residues long: Ferredoxin-like protein in nif region (92 aa).

4Fe-4S ferredoxin-type domains follow at residues 2 to 28 and 29 to 65; these read ALKIVESCVNCWACVDVCPSEAISLAG and PHFEISASKCTECDGDYAEKQCASICPVEGAILLADG. The [4Fe-4S] cluster site is built by cysteine 9, cysteine 12, cysteine 15, cysteine 19, cysteine 38, cysteine 41, cysteine 50, and cysteine 54.

[4Fe-4S] cluster serves as cofactor.

In terms of biological role, ferredoxins are iron-sulfur proteins that transfer electrons in a wide variety of metabolic reactions. The chain is Ferredoxin-like protein in nif region from Azotobacter vinelandii.